Reading from the N-terminus, the 225-residue chain is Small ribosomal subunit protein uS3 (225 aa).

Positions 39-109 (IYRFFNKFTR…ELKLNIEVVN (71 aa)) constitute a KH type-2 domain.

This sequence belongs to the universal ribosomal protein uS3 family. As to quaternary structure, part of the 30S ribosomal subunit. Forms a tight complex with proteins S10 and S14.

Binds the lower part of the 30S subunit head. Binds mRNA in the 70S ribosome, positioning it for translation. In Mycoplasma mobile (strain ATCC 43663 / 163K / NCTC 11711) (Mesomycoplasma mobile), this protein is Small ribosomal subunit protein uS3.